The chain runs to 459 residues: D(1)-like dopamine receptor (459 aa).

Over 1–23 the chain is Extracellular; that stretch reads MAQNFSTVGDGKQMLLERDSSKR. N4 carries N-linked (GlcNAc...) asparagine glycosylation. Residues 24-49 form a helical membrane-spanning segment; the sequence is VLTGCFLSLLIFTTLLGNTLVCVAVT. Over 50 to 60 the chain is Cytoplasmic; sequence KFRHLRSKVTN. Residues 61-87 form a helical membrane-spanning segment; the sequence is FFVISLAISDLLVAILVMPWKAATEIM. Residues 88–96 are Extracellular-facing; it reads GFWPFGEFC. C96 and C187 form a disulfide bridge. A helical transmembrane segment spans residues 97-119; sequence NIWVAFDIMCSTASILNLCVISV. Topologically, residues 120–138 are cytoplasmic; the sequence is DRYWAISSPFRYERKMTPK. The helical transmembrane segment at 139-164 threads the bilayer; that stretch reads VACLMISVAWTLSVLISFIPVQLNWH. Over 165-191 the chain is Extracellular; the sequence is KAQTASYVELNGTYAGDLPPDNCDSSL. Residues 192–216 traverse the membrane as a helical segment; sequence NRTYAISSSLISFYIPVAIMIVTYT. Residues 217-269 lie on the Cytoplasmic side of the membrane; sequence RIYRIAQKQIRRISALERAAESAQNRHSSMGNSLSMESECSFKMSFKRETKVL. Residues 270–297 form a helical membrane-spanning segment; it reads KTLSVIMGVFVCCWLPFFILNCMVPFCE. The Extracellular portion of the chain corresponds to 298-311; the sequence is ADDTTDFPCISSTT. The helical transmembrane segment at 312 to 333 threads the bilayer; it reads FDVFVWFGWANSSLNPIIYAFN. Residues 334–459 lie on the Cytoplasmic side of the membrane; that stretch reads ADFRKAFSIL…QNGQHKSMSC (126 aa).

Belongs to the G-protein coupled receptor 1 family.

It localises to the cell membrane. The protein resides in the cell projection. It is found in the cilium membrane. In terms of biological role, receptor for dopamine. The polypeptide is D(1)-like dopamine receptor (d14) (Takifugu rubripes (Japanese pufferfish)).